The primary structure comprises 61 residues: Small ribosomal subunit protein uS14 (61 aa).

Residues C24, C27, C40, and C43 each coordinate Zn(2+).

This sequence belongs to the universal ribosomal protein uS14 family. Zinc-binding uS14 subfamily. As to quaternary structure, part of the 30S ribosomal subunit. Contacts proteins S3 and S10. Requires Zn(2+) as cofactor.

Its function is as follows. Binds 16S rRNA, required for the assembly of 30S particles and may also be responsible for determining the conformation of the 16S rRNA at the A site. The sequence is that of Small ribosomal subunit protein uS14 from Anaeromyxobacter dehalogenans (strain 2CP-1 / ATCC BAA-258).